The chain runs to 721 residues: Translation initiation factor eIF2B subunit epsilon (721 aa).

A compositionally biased stretch (low complexity) spans 1–13; that stretch reads MAAPVVAPPGVVV. A disordered region spans residues 1-40; sequence MAAPVVAPPGVVVSRANKRSGAGPGGSGGGGARGAEEEPP. Ala2 is modified (N-acetylalanine). The residue at position 19 (Arg19) is an Omega-N-methylarginine. Residues 22-33 are compositionally biased toward gly residues; the sequence is AGPGGSGGGGAR. At Ser27 the chain carries Phosphoserine. Residues Lys61 and Lys103 each participate in a glycyl lysine isopeptide (Lys-Gly) (interchain with G-Cter in ubiquitin) cross-link. The residue at position 130 (Ser130) is a Phosphoserine. Residues Lys141 and Lys217 each participate in a glycyl lysine isopeptide (Lys-Gly) (interchain with G-Cter in ubiquitin) cross-link. Residue Thr322 is modified to Phosphothreonine. 2 disordered regions span residues 444-483 and 523-547; these read PEGS…MKGY and EESE…SPQM. 5 positions are modified to phosphoserine: Ser450, Ser466, Ser469, Ser532, and Ser540. Acidic residues-rich tracts occupy residues 456 to 471 and 523 to 537; these read AEED…DSGA and EESE…DSEE. Residues 543–720 enclose the W2 domain; sequence GSPQMDDIKV…KEAEEESSED (178 aa). At Ser544 the chain carries Phosphoserine; by DYRK2. Phosphoserine is present on Ser717.

This sequence belongs to the eIF-2B gamma/epsilon subunits family. In terms of assembly, component of the translation initiation factor 2B (eIF2B) complex which is a heterodecamer of two sets of five different subunits: alpha, beta, gamma, delta and epsilon. Subunits alpha, beta and delta comprise a regulatory subcomplex and subunits epsilon and gamma comprise a catalytic subcomplex. Within the complex, the hexameric regulatory complex resides at the center, with the two heterodimeric catalytic subcomplexes bound on opposite sides. In terms of processing, phosphorylated at Ser-544 by DYRK2; this is required for subsequent phosphorylation by GSK3B. Phosphorylated on serine and threonine residues by GSK3B; phosphorylation inhibits its function. Polyubiquitinated, probably by NEDD4.

It localises to the cytoplasm. The protein resides in the cytosol. Its activity is regulated as follows. Activated by the chemical integrated stress response (ISR) inhibitor ISRIB which stimulates guanine nucleotide exchange factor activity for both phosphorylated and unphosphorylated eIF2. Functionally, acts as a component of the translation initiation factor 2B (eIF2B) complex, which catalyzes the exchange of GDP for GTP on eukaryotic initiation factor 2 (eIF2) gamma subunit. Its guanine nucleotide exchange factor activity is repressed when bound to eIF2 complex phosphorylated on the alpha subunit, thereby limiting the amount of methionyl-initiator methionine tRNA available to the ribosome and consequently global translation is repressed. This chain is Translation initiation factor eIF2B subunit epsilon (EIF2B5), found in Homo sapiens (Human).